Consider the following 497-residue polypeptide: WASH complex subunit homolog 1 (497 aa).

Residues 306-497 (EASEPTEAEA…PPNFDDEEWD (192 aa)) are disordered. Over residues 323–339 (LPPPPPPMKLDPSPQPA) the composition is skewed to pro residues. Over residues 341-350 (TPVEITEIPP) the composition is skewed to low complexity. The span at 351–372 (IISPPAPPPPPPPPPPPPPPQT) shows a compositional bias: pro residues. The WH2 domain maps to 390 to 412 (GRSDLMAAIRAAGGAGNAKLSRI).

It belongs to the WASH1 family. Component of the WASH core complex. Component of the DHIC (ddl-1-containing hsf-1 inhibitory) complex, which contains at least ddl-1, ddl-2, hsb-1 and hsf-1. Within the complex, interacts with ddl-1. Formation of the DHIC may be dependent upon the Insulin/IGF-1-like signaling (IIS) mediated pathway. In terms of tissue distribution, expressed in several neurons located throughout the body.

Acts as a component of the WASH core complex that functions as a nucleation-promoting factor (NPF) at the surface of endosomes, where it recruits and activates the Arp2/3 complex to induce actin polymerization, playing a key role in the fission of tubules that serve as transport intermediates during endosome sorting. Acts as a component of the DHIC (ddl-1-containing hsf-1 inhibitory complex) which modulates lifespan by sequestering the heat shock transcription factor hsf-1 to negatively regulate its binding to DNA and its transcriptional activity. The protein is WASH complex subunit homolog 1 of Caenorhabditis elegans.